A 41-amino-acid polypeptide reads, in one-letter code: Bacteriocin (41 aa).

A disulfide bridge links Cys-9 with Cys-14.

It localises to the secreted. Bacteriocin active against S.aureus, S.typhi, B.thuringiensis, Klebsiella sp., E.coli KL16 and E.coli Gj137. This is Bacteriocin from Lactococcus sp.